A 152-amino-acid chain; its full sequence is Large ribosomal subunit protein uL13 (152 aa).

The protein belongs to the universal ribosomal protein uL13 family. As to quaternary structure, part of the 50S ribosomal subunit.

This protein is one of the early assembly proteins of the 50S ribosomal subunit, although it is not seen to bind rRNA by itself. It is important during the early stages of 50S assembly. This chain is Large ribosomal subunit protein uL13, found in Wolbachia pipientis subsp. Culex pipiens (strain wPip).